The following is a 521-amino-acid chain: UPF0053 protein BU323 (521 aa).

The next 7 helical transmembrane spans lie at 13–33, 49–69, 80–100, 125–145, 150–170, 185–205, and 207–227; these read LLTL…FVAI, IGLG…SWIV, FFSL…LLFK, FWAV…DAII, MVNQ…LMLL, VVVL…TEAL, and FCIP…IEIF. CBS domains follow at residues 311 to 370 and 374 to 434; these read MTPR…KIDA and SSKI…DADE.

The protein belongs to the UPF0053 family.

The protein localises to the cell membrane. The chain is UPF0053 protein BU323 from Buchnera aphidicola subsp. Acyrthosiphon pisum (strain APS) (Acyrthosiphon pisum symbiotic bacterium).